The sequence spans 205 residues: ATP phosphoribosyltransferase (205 aa).

This sequence belongs to the ATP phosphoribosyltransferase family. Short subfamily. As to quaternary structure, heteromultimer composed of HisG and HisZ subunits.

Its subcellular location is the cytoplasm. The catalysed reaction is 1-(5-phospho-beta-D-ribosyl)-ATP + diphosphate = 5-phospho-alpha-D-ribose 1-diphosphate + ATP. It participates in amino-acid biosynthesis; L-histidine biosynthesis; L-histidine from 5-phospho-alpha-D-ribose 1-diphosphate: step 1/9. In terms of biological role, catalyzes the condensation of ATP and 5-phosphoribose 1-diphosphate to form N'-(5'-phosphoribosyl)-ATP (PR-ATP). Has a crucial role in the pathway because the rate of histidine biosynthesis seems to be controlled primarily by regulation of HisG enzymatic activity. The chain is ATP phosphoribosyltransferase from Nitratiruptor sp. (strain SB155-2).